We begin with the raw amino-acid sequence, 413 residues long: Multifunctional CCA protein (413 aa).

Glycine 8 and arginine 11 together coordinate ATP. CTP-binding residues include glycine 8 and arginine 11. Residues glutamate 21 and aspartate 23 each contribute to the Mg(2+) site. The ATP site is built by arginine 91, arginine 137, and arginine 140. Arginine 91, arginine 137, and arginine 140 together coordinate CTP. The region spanning 228–329 (TGEHTLLALA…LKLLEGLDLF (102 aa)) is the HD domain.

Belongs to the tRNA nucleotidyltransferase/poly(A) polymerase family. Bacterial CCA-adding enzyme type 1 subfamily. Monomer. Can also form homodimers and oligomers. The cofactor is Mg(2+). It depends on Ni(2+) as a cofactor.

The catalysed reaction is a tRNA precursor + 2 CTP + ATP = a tRNA with a 3' CCA end + 3 diphosphate. It carries out the reaction a tRNA with a 3' CCA end + 2 CTP + ATP = a tRNA with a 3' CCACCA end + 3 diphosphate. Its function is as follows. Catalyzes the addition and repair of the essential 3'-terminal CCA sequence in tRNAs without using a nucleic acid template. Adds these three nucleotides in the order of C, C, and A to the tRNA nucleotide-73, using CTP and ATP as substrates and producing inorganic pyrophosphate. tRNA 3'-terminal CCA addition is required both for tRNA processing and repair. Also involved in tRNA surveillance by mediating tandem CCA addition to generate a CCACCA at the 3' terminus of unstable tRNAs. While stable tRNAs receive only 3'-terminal CCA, unstable tRNAs are marked with CCACCA and rapidly degraded. The protein is Multifunctional CCA protein of Alkalilimnicola ehrlichii (strain ATCC BAA-1101 / DSM 17681 / MLHE-1).